We begin with the raw amino-acid sequence, 197 residues long: Imidazoleglycerol-phosphate dehydratase (197 aa).

This sequence belongs to the imidazoleglycerol-phosphate dehydratase family.

The protein resides in the cytoplasm. It catalyses the reaction D-erythro-1-(imidazol-4-yl)glycerol 3-phosphate = 3-(imidazol-4-yl)-2-oxopropyl phosphate + H2O. It participates in amino-acid biosynthesis; L-histidine biosynthesis; L-histidine from 5-phospho-alpha-D-ribose 1-diphosphate: step 6/9. The chain is Imidazoleglycerol-phosphate dehydratase from Chromobacterium violaceum (strain ATCC 12472 / DSM 30191 / JCM 1249 / CCUG 213 / NBRC 12614 / NCIMB 9131 / NCTC 9757 / MK).